Here is a 199-residue protein sequence, read N- to C-terminus: Transcriptional regulatory protein EntR (199 aa).

Positions 3-124 constitute a Response regulatory domain; the sequence is KILVIDRCHF…TLSHTIQEAL (122 aa). At Asp-8 the chain carries 4-aspartylphosphate. The 66-residue stretch at 133–198 folds into the HTH luxR-type domain; the sequence is PKNATPLLTP…SPFLSLPGKG (66 aa). Positions 157–176 form a DNA-binding region, H-T-H motif; sequence NNAIAAALSIHGKTVYTYKR.

May serve to repress the entericidin locus in C.freundii. The sequence is that of Transcriptional regulatory protein EntR (ecnR) from Citrobacter freundii.